The sequence spans 398 residues: MWWLLATTCCVLLSGPIDGYKQESITNPEANMNISELISYWGYPYEKHDVITEDGYILGTYRIPHGKGCSRKTAPKAVVYLQHGLIASANNWICNLPNNSLAFLLADSGYDVWLGNSRGNTWSRNHLRLSPKSPQYWAFSWDEMAKYDLPATVNLILEKSGQKQLFYVGHSQGTTIAFIAFSTNPELAKKIRLFFALAPVATVKYTRSPMKKLTTLSRKAVKVLFGDKMFSTHTWFEQFIATKVCNRKLFHQLCSNFLFSLSGFDPQNLNMSRLDVYLSQSPAGTSVQNMLHWAQAVNSGQLQAFDWGNPDQNMMHFNQLTPPVYNISKMRVPTAMWSGGQDVVADAKDTKNLLPKIANLIYYKEIPHYNHMDFYLGQDAPQEVYGDLIRMIEESLQN.

Positions 1–19 (MWWLLATTCCVLLSGPIDG) are cleaved as a signal peptide. The AB hydrolase-1 domain occupies 78–377 (VVYLQHGLIA…HYNHMDFYLG (300 aa)). Ser171 serves as the catalytic Nucleophile. Cysteines 245 and 254 form a disulfide. N-linked (GlcNAc...) asparagine glycosylation is found at Asn270 and Asn326. Active-site charge relay system residues include Asp342 and His371.

This sequence belongs to the AB hydrolase superfamily. Lipase family.

It is found in the secreted. Plays a highly specific role in the last step of keratinocyte differentiation. May have an essential function in lipid metabolism of the most differentiated epidermal layers. This chain is Lipase member K (Lipk), found in Mus musculus (Mouse).